The sequence spans 444 residues: Glutamyl-tRNA reductase (444 aa).

Substrate is bound by residues 49 to 52, S109, 114 to 116, and Q120; these read TCNR and ETQ. The active-site Nucleophile is C50. 189–194 serves as a coordination point for NADP(+); sequence GAGKMG.

Belongs to the glutamyl-tRNA reductase family. In terms of assembly, homodimer.

It carries out the reaction (S)-4-amino-5-oxopentanoate + tRNA(Glu) + NADP(+) = L-glutamyl-tRNA(Glu) + NADPH + H(+). The protein operates within porphyrin-containing compound metabolism; protoporphyrin-IX biosynthesis; 5-aminolevulinate from L-glutamyl-tRNA(Glu): step 1/2. In terms of biological role, catalyzes the NADPH-dependent reduction of glutamyl-tRNA(Glu) to glutamate 1-semialdehyde (GSA). This is Glutamyl-tRNA reductase from Bacillus anthracis (strain A0248).